The chain runs to 255 residues: ATP synthase subunit a 2 (255 aa).

5 consecutive transmembrane segments (helical) span residues 26–46, 86–106, 131–151, 205–225, and 230–250; these read SINI…IGVF, LIGP…SIDL, DVNV…GYTL, MIFI…SVPW, and ILIV…YLAM.

This sequence belongs to the ATPase A chain family. As to quaternary structure, F-type ATPases have 2 components, CF(1) - the catalytic core - and CF(0) - the membrane proton channel. CF(1) has five subunits: alpha(3), beta(3), gamma(1), delta(1), epsilon(1). CF(0) has three main subunits: a(1), b(2) and c(9-12). The alpha and beta chains form an alternating ring which encloses part of the gamma chain. CF(1) is attached to CF(0) by a central stalk formed by the gamma and epsilon chains, while a peripheral stalk is formed by the delta and b chains.

The protein localises to the cell inner membrane. Its function is as follows. Key component of the proton channel; it plays a direct role in the translocation of protons across the membrane. This is ATP synthase subunit a 2 from Photobacterium profundum (strain SS9).